Here is a 291-residue protein sequence, read N- to C-terminus: HTH-type transcriptional regulator DgcR (291 aa).

The region spanning 1–58 (MRLRHIEVFHAIYTTGSITNAAKALHVSQPSVSKVLSHAEMQLGFKLFERVKGRLIPT) is the HTH lysR-type domain. The segment at residues 18–37 (ITNAAKALHVSQPSVSKVLS) is a DNA-binding region (H-T-H motif).

It belongs to the LysR transcriptional regulatory family.

Transcriptional regulator that positively regulates the expression of the D-Glu gene cluster (DGC). The cluster includes dgcN and dgcA, which are involved in a deamination-independent D-glutamate degradation pathway, dgcR itself, dgcT, dgcP and dgcH. Acts by binding the consensus sequence upstream of dgcR, dgcT, dgcP and dgcH. In Pseudoalteromonas sp, this protein is HTH-type transcriptional regulator DgcR.